We begin with the raw amino-acid sequence, 221 residues long: MCPLRSLLLISTLVLLHHLPHLSLGRSLPTTTASPGRSCLDYSQNLLRAVSNTLQKARQTLEFYSCTSEEIDHEDITKDKTSTVEACLPLELATNESCLASRETSFITNGRCLASGKTSFMTTLCLRSIYEDLKMYHVEFQAMNAKLLMDPKRQVFLDQNMLAAIAELMQALNFDSETVPQKPSLEELDFYKTKVKLCILLHAFRIRAVTIDRMMSYLSSS.

An N-terminal signal peptide occupies residues 1-25 (MCPLRSLLLISTLVLLHHLPHLSLG). Cystine bridges form between Cys39/Cys112, Cys66/Cys198, and Cys87/Cys125. Asn95 carries N-linked (GlcNAc...) asparagine glycosylation.

The protein belongs to the IL-6 superfamily. Heterodimer with IL12B; disulfide-linked. This heterodimer is known as interleukin IL-12. Heterodimer with EBI3/IL27B; not disulfide-linked. This heterodimer is known as interleukin IL-35. Interacts with NBR1; this interaction promotes IL-12 secretion.

It is found in the secreted. In terms of biological role, heterodimerizes with IL12B to form the IL-12 cytokine or with EBI3/IL27B to form the IL-35 cytokine. IL-12 is primarily produced by professional antigen-presenting cells (APCs) such as B-cells and dendritic cells (DCs) as well as macrophages and granulocytes and regulates T-cell and natural killer-cell responses, induces the production of interferon-gamma (IFN-gamma), favors the differentiation of T-helper 1 (Th1) cells and is an important link between innate resistance and adaptive immunity. Mechanistically, exerts its biological effects through a receptor composed of IL12R1 and IL12R2 subunits. Binding to the receptor results in the rapid tyrosine phosphorylation of a number of cellular substrates including the JAK family kinases TYK2 and JAK2. In turn, recruited STAT4 gets phosphorylated and translocates to the nucleus where it regulates cytokine/growth factor responsive genes. As part of IL-35, plays essential roles in maintaining the immune homeostasis of the liver microenvironment and also functions as an immune-suppressive cytokine. Mediates biological events through unconventional receptors composed of IL12RB2 and gp130/IL6ST heterodimers or homodimers. Signaling requires the transcription factors STAT1 and STAT4, which form a unique heterodimer that binds to distinct DNA sites. This chain is Interleukin-12 subunit alpha (IL12A), found in Bubalus carabanensis (Swamp type water buffalo).